Here is a 227-residue protein sequence, read N- to C-terminus: 7-cyano-7-deazaguanine synthase (227 aa).

An ATP-binding site is contributed by 9–19 (LSGGLDSATVL). 4 residues coordinate Zn(2+): cysteine 189, cysteine 199, cysteine 202, and cysteine 205.

It belongs to the QueC family. Zn(2+) is required as a cofactor.

It catalyses the reaction 7-carboxy-7-deazaguanine + NH4(+) + ATP = 7-cyano-7-deazaguanine + ADP + phosphate + H2O + H(+). It functions in the pathway purine metabolism; 7-cyano-7-deazaguanine biosynthesis. Catalyzes the ATP-dependent conversion of 7-carboxy-7-deazaguanine (CDG) to 7-cyano-7-deazaguanine (preQ(0)). The chain is 7-cyano-7-deazaguanine synthase from Cupriavidus taiwanensis (strain DSM 17343 / BCRC 17206 / CCUG 44338 / CIP 107171 / LMG 19424 / R1) (Ralstonia taiwanensis (strain LMG 19424)).